Consider the following 108-residue polypeptide: Nucleoid-associated protein Rmet_2128 (108 aa).

The span at Thr-86–Ser-96 shows a compositional bias: polar residues. The tract at residues Thr-86–Phe-108 is disordered. The span at Pro-99 to Phe-108 shows a compositional bias: pro residues.

The protein belongs to the YbaB/EbfC family. As to quaternary structure, homodimer.

The protein resides in the cytoplasm. It is found in the nucleoid. Its function is as follows. Binds to DNA and alters its conformation. May be involved in regulation of gene expression, nucleoid organization and DNA protection. The sequence is that of Nucleoid-associated protein Rmet_2128 from Cupriavidus metallidurans (strain ATCC 43123 / DSM 2839 / NBRC 102507 / CH34) (Ralstonia metallidurans).